The primary structure comprises 551 residues: Adenine deaminase (551 aa).

Belongs to the metallo-dependent hydrolases superfamily. Adenine deaminase family. Requires Mn(2+) as cofactor.

It carries out the reaction adenine + H2O + H(+) = hypoxanthine + NH4(+). The protein is Adenine deaminase of Methanosarcina barkeri (strain Fusaro / DSM 804).